Consider the following 140-residue polypeptide: Ribosome maturation factor RimP (140 aa).

It belongs to the RimP family.

The protein localises to the cytoplasm. In terms of biological role, required for maturation of 30S ribosomal subunits. This chain is Ribosome maturation factor RimP, found in Campylobacter jejuni subsp. jejuni serotype O:2 (strain ATCC 700819 / NCTC 11168).